The primary structure comprises 189 residues: Ion-translocating oxidoreductase complex subunit B (189 aa).

The segment at 1–26 (MSAIVIAIVVLTILALVFGVLLGFAA) is hydrophobic. Residues 32–90 (EGNPLTDQIEALLPQTQCGQCGYPGCRPYAEAIANGDKVNKCPPGGAATMEKLADLMGV) form the 4Fe-4S domain. The [4Fe-4S] cluster site is built by cysteine 49, cysteine 52, cysteine 57, cysteine 73, cysteine 114, cysteine 117, cysteine 120, cysteine 124, cysteine 144, cysteine 147, cysteine 150, and cysteine 154. 4Fe-4S ferredoxin-type domains are found at residues 105 to 134 (KVAY…GSGK) and 135 to 164 (LMHT…MLPV).

This sequence belongs to the 4Fe4S bacterial-type ferredoxin family. RnfB subfamily. As to quaternary structure, the complex is composed of six subunits: RnfA, RnfB, RnfC, RnfD, RnfE and RnfG. Requires [4Fe-4S] cluster as cofactor.

It localises to the cell inner membrane. Part of a membrane-bound complex that couples electron transfer with translocation of ions across the membrane. This chain is Ion-translocating oxidoreductase complex subunit B, found in Shewanella pealeana (strain ATCC 700345 / ANG-SQ1).